Consider the following 288-residue polypeptide: Eukaryotic translation initiation factor 3 subunit G (288 aa).

A disordered region spans residues Met1 to Gly33. The span at Ala11–Asn20 shows a compositional bias: acidic residues. The segment covering Glu21–Gly33 has biased composition (polar residues). The 79-residue stretch at Ala208 to Lys286 folds into the RRM domain.

This sequence belongs to the eIF-3 subunit G family. As to quaternary structure, component of the eukaryotic translation initiation factor 3 (eIF-3) complex.

It is found in the cytoplasm. In terms of biological role, RNA-binding component of the eukaryotic translation initiation factor 3 (eIF-3) complex, which is involved in protein synthesis of a specialized repertoire of mRNAs and, together with other initiation factors, stimulates binding of mRNA and methionyl-tRNAi to the 40S ribosome. The eIF-3 complex specifically targets and initiates translation of a subset of mRNAs involved in cell proliferation. This subunit can bind 18S rRNA. The chain is Eukaryotic translation initiation factor 3 subunit G (tif35) from Sclerotinia sclerotiorum (strain ATCC 18683 / 1980 / Ss-1) (White mold).